Consider the following 387-residue polypeptide: Cytochrome b (387 aa).

Transmembrane regions (helical) follow at residues 32-52, 76-98, 113-133, and 179-199; these read FGSLLACVLVVQIVTGILLAC, FLLRALHANGASFFFIFLYLHIG, TWNIGVIIFLLTIITAFLGYC, and FFSLHYLMPFVIAALSIMHLI. Residues histidine 82 and histidine 96 each coordinate heme b. Heme b is bound by residues histidine 183 and histidine 197. Histidine 202 provides a ligand contact to a ubiquinone. Helical transmembrane passes span 225 to 245, 289 to 309, 321 to 341, and 348 to 368; these read FLIKDLITIFIFLLAINYMVF, QLGVVAMLLSILVLLLLPLLD, MGKFFFWCFVADFCILAWIGG, and FITIGAYATAFYFIYFFILIP.

It belongs to the cytochrome b family. In terms of assembly, fungal cytochrome b-c1 complex contains 10 subunits; 3 respiratory subunits, 2 core proteins and 5 low-molecular weight proteins. Cytochrome b-c1 complex is a homodimer. The cofactor is heme b.

It is found in the mitochondrion inner membrane. Its function is as follows. Component of the ubiquinol-cytochrome c reductase complex (complex III or cytochrome b-c1 complex) that is part of the mitochondrial respiratory chain. The b-c1 complex mediates electron transfer from ubiquinol to cytochrome c. Contributes to the generation of a proton gradient across the mitochondrial membrane that is then used for ATP synthesis. This chain is Cytochrome b (cob), found in Schizosaccharomyces octosporus (Fission yeast).